Reading from the N-terminus, the 330-residue chain is DNA-directed RNA polymerase subunit alpha (330 aa).

Residues 1–231 (MQTNLLKPKT…EQLAVFAQLE (231 aa)) are alpha N-terminal domain (alpha-NTD). The interval 250–330 (FDPILLRPVD…NWPPAGLDKR (81 aa)) is alpha C-terminal domain (alpha-CTD).

It belongs to the RNA polymerase alpha chain family. As to quaternary structure, homodimer. The RNAP catalytic core consists of 2 alpha, 1 beta, 1 beta' and 1 omega subunit. When a sigma factor is associated with the core the holoenzyme is formed, which can initiate transcription.

The catalysed reaction is RNA(n) + a ribonucleoside 5'-triphosphate = RNA(n+1) + diphosphate. Functionally, DNA-dependent RNA polymerase catalyzes the transcription of DNA into RNA using the four ribonucleoside triphosphates as substrates. This is DNA-directed RNA polymerase subunit alpha from Paracidovorax citrulli (strain AAC00-1) (Acidovorax citrulli).